We begin with the raw amino-acid sequence, 445 residues long: MDIRQVTETIAMIEEQNFDIRTITMGISLLDCIDPDINRAAEKIYQKITTKAANLVAVGDEIAAELGIPIVNKRVSVTPISLIGAATDATDYVVLAKALDKAAKEIGVDFIGGFSALVQKGYQKGDEILINSIPRALAETDKVCSSVNIGSTKSGINMTAVADMGRIIKETANLSDMGVAKLVVFANAVEDNPFMAGAFHGVGEADVIINVGVSGPGVVKRALEKVRGQSFDVVAETVKKTAFKITRIGQLVGQMASERLGVEFGIVDLSLAPTPAVGDSVARVLEEMGLETVGTHGTTAALALLNDQVKKGGVMACNQVGGLSGAFIPVSEDEGMIAAVQNGSLNLEKLEAMTAICSVGLDMIAIPEDTPAETIAAMIADEAAIGVINMKTTAVRIIPKGREGDMIEFGGLLGTAPVMKVNGASSVDFISRGGQIPAPIHSFKN.

Belongs to the UPF0210 family. In terms of assembly, homodimer.

The polypeptide is UPF0210 protein SPP_0289 (Streptococcus pneumoniae (strain P1031)).